The chain runs to 174 residues: Large ribosomal subunit protein uL10 (174 aa).

It belongs to the universal ribosomal protein uL10 family. Part of the ribosomal stalk of the 50S ribosomal subunit. The N-terminus interacts with L11 and the large rRNA to form the base of the stalk. The C-terminus forms an elongated spine to which L12 dimers bind in a sequential fashion forming a multimeric L10(L12)X complex.

In terms of biological role, forms part of the ribosomal stalk, playing a central role in the interaction of the ribosome with GTP-bound translation factors. The polypeptide is Large ribosomal subunit protein uL10 (Geobacter sulfurreducens (strain ATCC 51573 / DSM 12127 / PCA)).